We begin with the raw amino-acid sequence, 1073 residues long: Carbamoyl phosphate synthase large chain (1073 aa).

Positions Met-1–Glu-403 are carboxyphosphate synthetic domain. Positions 129, 169, 175, 176, 208, 210, 215, 241, 242, 243, 285, and 299 each coordinate ATP. The 196-residue stretch at Asp-133–Ile-328 folds into the ATP-grasp 1 domain. Gln-285, Glu-299, and Asn-301 together coordinate Mg(2+). Residues Gln-285, Glu-299, and Asn-301 each contribute to the Mn(2+) site. The interval Val-404 to Ala-553 is oligomerization domain. The carbamoyl phosphate synthetic domain stretch occupies residues Asn-554–Ser-935. One can recognise an ATP-grasp 2 domain in the interval Gln-678–Ala-869. ATP is bound by residues Arg-714, His-753, Leu-755, Glu-760, Gly-785, Val-786, His-787, Ser-788, Gln-828, and Glu-840. Positions 828, 840, and 842 each coordinate Mg(2+). Mn(2+) contacts are provided by Gln-828, Glu-840, and Asn-842. The MGS-like domain maps to Glu-936–Ala-1073. Positions Glu-936–Ala-1073 are allosteric domain.

This sequence belongs to the CarB family. In terms of assembly, composed of two chains; the small (or glutamine) chain promotes the hydrolysis of glutamine to ammonia, which is used by the large (or ammonia) chain to synthesize carbamoyl phosphate. Tetramer of heterodimers (alpha,beta)4. The cofactor is Mg(2+). It depends on Mn(2+) as a cofactor.

It catalyses the reaction hydrogencarbonate + L-glutamine + 2 ATP + H2O = carbamoyl phosphate + L-glutamate + 2 ADP + phosphate + 2 H(+). It carries out the reaction hydrogencarbonate + NH4(+) + 2 ATP = carbamoyl phosphate + 2 ADP + phosphate + 2 H(+). Its pathway is amino-acid biosynthesis; L-arginine biosynthesis; carbamoyl phosphate from bicarbonate: step 1/1. It participates in pyrimidine metabolism; UMP biosynthesis via de novo pathway; (S)-dihydroorotate from bicarbonate: step 1/3. Functionally, large subunit of the glutamine-dependent carbamoyl phosphate synthetase (CPSase). CPSase catalyzes the formation of carbamoyl phosphate from the ammonia moiety of glutamine, carbonate, and phosphate donated by ATP, constituting the first step of 2 biosynthetic pathways, one leading to arginine and/or urea and the other to pyrimidine nucleotides. The large subunit (synthetase) binds the substrates ammonia (free or transferred from glutamine from the small subunit), hydrogencarbonate and ATP and carries out an ATP-coupled ligase reaction, activating hydrogencarbonate by forming carboxy phosphate which reacts with ammonia to form carbamoyl phosphate. This Pseudomonas putida (strain ATCC 47054 / DSM 6125 / CFBP 8728 / NCIMB 11950 / KT2440) protein is Carbamoyl phosphate synthase large chain.